The chain runs to 167 residues: UPF0254 protein MJ1251 (167 aa).

Belongs to the UPF0254 family.

In Methanocaldococcus jannaschii (strain ATCC 43067 / DSM 2661 / JAL-1 / JCM 10045 / NBRC 100440) (Methanococcus jannaschii), this protein is UPF0254 protein MJ1251.